Reading from the N-terminus, the 254-residue chain is MVLCVQGLCPLLAVEQIGQRPLWAQSLELPQQVMQPLSAGAFLEEAVEESPAQPEREPKVVDPEEDLLCIAKTFSYLRESGWYWGSITASEARQHLQKMPEGTFLVRDSTHPSYLFTLSVKTTRGPTNVRIEYADSSFRLDSNCLSRPRILAFPDVVSLVQHYVASCAADTRSDSPDLATTPALPTPKEDAPGDPALPATAVHLKLVQPFVRRSSTRSLQHLCRLVINRLVVDVDCLPLPRRMADYLRQYPFQL.

Residues 82–188 (WYWGSITASE…ATTPALPTPK (107 aa)) enclose the SH2 domain. The segment at 171 to 195 (TRSDSPDLATTPALPTPKEDAPGDP) is disordered. The SOCS box domain occupies 205–253 (KLVQPFVRRSSTRSLQHLCRLVINRLVVDVDCLPLPRRMADYLRQYPFQ).

Stably associated with the tyrosine-phosphorylated IL3 receptor beta chain and tyrosine-phosphorylated EPO receptor (EPOR).

The protein operates within protein modification; protein ubiquitination. Functionally, SOCS family proteins form part of a classical negative feedback system that regulates cytokine signal transduction. CIS is involved in the negative regulation of cytokines that signal through the JAK-STAT5 pathway such as erythropoietin, prolactin and interleukin 3 (IL3) receptor. Inhibits STAT5 trans-activation by suppressing its tyrosine phosphorylation. May be a substrate recognition component of a SCF-like ECS (Elongin BC-CUL2/5-SOCS-box protein) E3 ubiquitin-protein ligase complex which mediates the ubiquitination and subsequent proteasomal degradation of target proteins. The chain is Cytokine-inducible SH2-containing protein (CISH) from Bos taurus (Bovine).